A 488-amino-acid chain; its full sequence is Zinc metalloproteinase-disintegrin agkistin (488 aa).

Residues 1 to 20 form the signal peptide; it reads MIQVLLVTICLAVFPYQGSS. Positions 21–195 are excised as a propeptide; the sequence is IILESGNVND…NFPPDGRIEF (175 aa). The Peptidase M12B domain occupies 198 to 394; the sequence is RYIELVIVAD…NPLASYCLYN (197 aa). Glutamate 201 serves as a coordination point for Ca(2+). Residue asparagine 258 is glycosylated (N-linked (GlcNAc...) asparagine). Aspartate 285 provides a ligand contact to Ca(2+). 3 disulfide bridges follow: cysteine 309–cysteine 391, cysteine 349–cysteine 373, and cysteine 351–cysteine 356. Histidine 334 is a binding site for Zn(2+). Glutamate 335 is an active-site residue. Residues histidine 338 and histidine 344 each contribute to the Zn(2+) site. Positions 391, 394, 406, 409, 413, 416, and 419 each coordinate Ca(2+). The Disintegrin domain maps to 404-488; the sequence is PPVCGNYYLE…AGCPRNPSHA (85 aa). 7 disulfides stabilise this stretch: cysteine 407–cysteine 426, cysteine 418–cysteine 436, cysteine 420–cysteine 431, cysteine 430–cysteine 453, cysteine 444–cysteine 450, cysteine 449–cysteine 474, and cysteine 462–cysteine 481. The Cell attachment site signature appears at 466–468; that stretch reads RGD.

The protein belongs to the venom metalloproteinase (M12B) family. P-II subfamily. P-IIb sub-subfamily. In terms of assembly, monomer. The cofactor is Zn(2+). As to expression, expressed by the venom gland.

The protein resides in the secreted. In terms of biological role, inhibits ADP-induced human platelet aggregation, inhibits bovine aortic endothelial cells (BAEC) migration, has anti-angiogenic activity and induces BAEC and human micro-vascular endothelial cell (HMEC) apoptosis. The metalloproteinase domain may act in hemorrhage. In Gloydius halys (Chinese water mocassin), this protein is Zinc metalloproteinase-disintegrin agkistin.